The chain runs to 600 residues: Elongation factor 4 (600 aa).

Positions 5–187 (KYIRNFSIVA…EIVEKIPAPE (183 aa)) constitute a tr-type G domain. GTP-binding positions include 17–22 (DHGKST) and 134–137 (NKVD).

The protein belongs to the TRAFAC class translation factor GTPase superfamily. Classic translation factor GTPase family. LepA subfamily.

It localises to the cell membrane. The enzyme catalyses GTP + H2O = GDP + phosphate + H(+). Functionally, required for accurate and efficient protein synthesis under certain stress conditions. May act as a fidelity factor of the translation reaction, by catalyzing a one-codon backward translocation of tRNAs on improperly translocated ribosomes. Back-translocation proceeds from a post-translocation (POST) complex to a pre-translocation (PRE) complex, thus giving elongation factor G a second chance to translocate the tRNAs correctly. Binds to ribosomes in a GTP-dependent manner. This is Elongation factor 4 from Clostridium perfringens (strain 13 / Type A).